Here is a 241-residue protein sequence, read N- to C-terminus: Probable transcriptional regulatory protein lin1570 (241 aa).

The segment covering 1-14 (MAGHSKWNNIQGRK) has biased composition (polar residues). A disordered region spans residues 1-22 (MAGHSKWNNIQGRKNAQDSKRS).

Belongs to the TACO1 family.

The protein resides in the cytoplasm. This is Probable transcriptional regulatory protein lin1570 from Listeria innocua serovar 6a (strain ATCC BAA-680 / CLIP 11262).